The chain runs to 312 residues: Ribosomal protein L11 methyltransferase (312 aa).

Residues Thr160, Gly181, Asp203, and Asn246 each contribute to the S-adenosyl-L-methionine site.

It belongs to the methyltransferase superfamily. PrmA family.

The protein localises to the cytoplasm. The catalysed reaction is L-lysyl-[protein] + 3 S-adenosyl-L-methionine = N(6),N(6),N(6)-trimethyl-L-lysyl-[protein] + 3 S-adenosyl-L-homocysteine + 3 H(+). Methylates ribosomal protein L11. The polypeptide is Ribosomal protein L11 methyltransferase (Staphylococcus aureus (strain COL)).